We begin with the raw amino-acid sequence, 148 residues long: Nucleoside diphosphate kinase A (148 aa).

ATP-binding residues include Lys9, Phe57, Arg85, Thr91, Arg102, and Asn112. The active-site Pros-phosphohistidine intermediate is His115.

The protein belongs to the NDK family. Mg(2+) serves as cofactor.

It catalyses the reaction a 2'-deoxyribonucleoside 5'-diphosphate + ATP = a 2'-deoxyribonucleoside 5'-triphosphate + ADP. The catalysed reaction is a ribonucleoside 5'-diphosphate + ATP = a ribonucleoside 5'-triphosphate + ADP. In terms of biological role, major role in the synthesis of nucleoside triphosphates other than ATP. The ATP gamma phosphate is transferred to the NDP beta phosphate via a ping-pong mechanism, using a phosphorylated active-site intermediate. In Flaveria bidentis (Coastal plain yellowtops), this protein is Nucleoside diphosphate kinase A.